The chain runs to 134 residues: Ribonuclease VapC1 (134 aa).

A PINc domain is found at Tyr3 to Trp132. Mg(2+) is bound by residues Asp6 and Asp99.

Belongs to the PINc/VapC protein family. Requires Mg(2+) as cofactor.

Functionally, toxic component of a type II toxin-antitoxin (TA) system. Acts as an RNase, its toxic effect is neutralized by VapB1 antitoxin. The polypeptide is Ribonuclease VapC1 (Haemophilus influenzae (strain ATCC 51907 / DSM 11121 / KW20 / Rd)).